The sequence spans 564 residues: MNKIIIRKLFIFDVIEKKAKSVDFEDGINIVTSKGNQLGKSTIMKSIYYTLGAEVFFADRLNVKSKIHMLETDVNDKKYTFIRHGDVVVIKDGKGIFKTSNASELSSKLHDIFGFSVFLEDKQKKYVIAPPVFRYIPYYIDQDHGWTSELKSFDKLGQFDKKSRDLLFYYHLNILDEDYGVKLKEKKELDASMTDLKTRKKEILGLLAYIRENITAFNLEMDITALQIQKREILNKYKKYSYDLNNIRRKILEYQEEIFKIDNVIDNLNSTLKQNDKVREHIKHQFDVECPYCNNHFEIQAKDILRINYNIVDLEASKLEMLDIKEKLLGKMKKVQKEYEDYQATLKAIEEEKVDSENTLEDILKFKGLQETQNQLNTELVKNTGDIEEKSEDLKEIRRDLKKWQDEIDKVNSRYKDILNLNLIRFNTNEHALPEKYNIGKNLKASGSGQVRVNLARVYSFIKLLEEYNPTGLKYPLVIDSPKGGEQSTTNSELILRLLTEKAQISNQIILATIDFESFYNGDTKKFNIISLENEPYHLLSAEDYQNNQVIIDDFVSLYFEANQ.

In terms of biological role, component of antiviral defense system Lamassu type II, composed of LmuA and LmuB. Expression of Lamassu type II in B.subtilis (strain BEST7003) confers resistance to phage SpBeta. May be an ATPase. This is Lamassu protein LmuB from Bacillus cereus (strain VD014).